Here is a 250-residue protein sequence, read N- to C-terminus: rRNA methyltransferase 2, mitochondrial (250 aa).

A mitochondrion-targeting transit peptide spans M1–S35. S-adenosyl-L-methionine is bound by residues P90–W93, D119, D136–F137, and D161. Residue K201 is the Proton acceptor of the active site.

Belongs to the class I-like SAM-binding methyltransferase superfamily. RNA methyltransferase RlmE family.

It localises to the mitochondrion. The enzyme catalyses a uridine in rRNA + S-adenosyl-L-methionine = a 2'-O-methyluridine in rRNA + S-adenosyl-L-homocysteine + H(+). Functionally, S-adenosyl-L-methionine-dependent 2'-O-ribose methyltransferase that catalyzes the formation of 2'-O-methyluridine at position 1579 (Um1579) in the mitochondrial large subunit ribosomal RNA (mtLSU rRNA), a universally conserved modification in the peptidyl transferase domain of the mtLSU rRNA. This activity may require prior 2'-O-methylguanosine modification at position 1580 (Gm1580) by MRM3. Essential for late-stage assembly of mtLSU required for efficient translation of mitochondrial DNA encoded proteins; methyltransferase activity is not required for this function. Essential for mitochondrial respiratory function. This chain is rRNA methyltransferase 2, mitochondrial, found in Drosophila melanogaster (Fruit fly).